The sequence spans 377 residues: Endoplasmic reticulum-Golgi intermediate compartment protein 2 (377 aa).

The Cytoplasmic segment spans residues 1 to 33 (MRRLNRRKTLSLVKELDAFPKVPDSYVETSASG). A helical membrane pass occupies residues 34 to 54 (GTVSLIAFTTMALLTIMEFSV). Residues 55–319 (YQDTWMKYEY…PFWQFFVRLC (265 aa)) are Lumenal-facing. The helical transmembrane segment at 320 to 340 (GIIGGIFSTTGMLHGIGKFIV) threads the bilayer. The Cytoplasmic portion of the chain corresponds to 341–377 (EIICCRFRLGSYKPVRSVPFADGHTDNHLPLLENNTH).

This sequence belongs to the ERGIC family. May form a heteromeric complex composed of ERGIC1, ERGIC2 and ERGIC3. Interacts with ERGIC3, the interaction is required for the stable expression of both proteins. May interact with EEF1A1.

The protein localises to the endoplasmic reticulum-Golgi intermediate compartment membrane. Its subcellular location is the golgi apparatus. It is found in the cis-Golgi network membrane. The protein resides in the endoplasmic reticulum membrane. It localises to the cytoplasm. The protein localises to the nucleus. Its function is as follows. Possible role in transport between endoplasmic reticulum and Golgi. In Mus musculus (Mouse), this protein is Endoplasmic reticulum-Golgi intermediate compartment protein 2 (Ergic2).